The sequence spans 71 residues: uncharacterized protein (71 aa).

This sequence belongs to the varicellovirus ORF57 protein family.

This is an uncharacterized protein from Homo sapiens (Human).